Here is a 344-residue protein sequence, read N- to C-terminus: Anthranilate phosphoribosyltransferase (344 aa).

5-phospho-alpha-D-ribose 1-diphosphate-binding positions include Gly84, 87 to 88 (GD), Thr92, 94 to 97 (NIST), 112 to 120 (KHGNRSVSS), and Ser124. Residue Gly84 participates in anthranilate binding. Ser96 provides a ligand contact to Mg(2+). Asn115 serves as a coordination point for anthranilate. Anthranilate is bound at residue Arg170. The Mg(2+) site is built by Asp229 and Glu230.

Belongs to the anthranilate phosphoribosyltransferase family. As to quaternary structure, homodimer. Mg(2+) serves as cofactor.

It catalyses the reaction N-(5-phospho-beta-D-ribosyl)anthranilate + diphosphate = 5-phospho-alpha-D-ribose 1-diphosphate + anthranilate. The protein operates within amino-acid biosynthesis; L-tryptophan biosynthesis; L-tryptophan from chorismate: step 2/5. Catalyzes the transfer of the phosphoribosyl group of 5-phosphorylribose-1-pyrophosphate (PRPP) to anthranilate to yield N-(5'-phosphoribosyl)-anthranilate (PRA). The chain is Anthranilate phosphoribosyltransferase from Xylella fastidiosa (strain M23).